An 82-amino-acid chain; its full sequence is Small ribosomal subunit protein bS18 (82 aa).

Positions 1–20 are disordered; the sequence is MAEVSSSTVRRPFHRRRKTC.

The protein belongs to the bacterial ribosomal protein bS18 family. As to quaternary structure, part of the 30S ribosomal subunit. Forms a tight heterodimer with protein bS6.

Binds as a heterodimer with protein bS6 to the central domain of the 16S rRNA, where it helps stabilize the platform of the 30S subunit. This is Small ribosomal subunit protein bS18 from Allorhizobium ampelinum (strain ATCC BAA-846 / DSM 112012 / S4) (Agrobacterium vitis (strain S4)).